A 339-amino-acid chain; its full sequence is RNA 3'-terminal phosphate cyclase (339 aa).

ATP contacts are provided by residues glutamine 101 and 283–286 (HMSD). Histidine 307 acts as the Tele-AMP-histidine intermediate in catalysis.

The protein belongs to the RNA 3'-terminal cyclase family. Type 1 subfamily.

The protein localises to the cytoplasm. The catalysed reaction is a 3'-end 3'-phospho-ribonucleotide-RNA + ATP = a 3'-end 2',3'-cyclophospho-ribonucleotide-RNA + AMP + diphosphate. Its function is as follows. Catalyzes the conversion of 3'-phosphate to a 2',3'-cyclic phosphodiester at the end of RNA. The mechanism of action of the enzyme occurs in 3 steps: (A) adenylation of the enzyme by ATP; (B) transfer of adenylate to an RNA-N3'P to produce RNA-N3'PP5'A; (C) and attack of the adjacent 2'-hydroxyl on the 3'-phosphorus in the diester linkage to produce the cyclic end product. The biological role of this enzyme is unknown but it is likely to function in some aspects of cellular RNA processing. The sequence is that of RNA 3'-terminal phosphate cyclase from Sulfurisphaera tokodaii (strain DSM 16993 / JCM 10545 / NBRC 100140 / 7) (Sulfolobus tokodaii).